A 371-amino-acid chain; its full sequence is MDFQLQAVDDNARAGVLNLAHSQVETPVFMPVGTQGCIKSLDAMDAQEILGAKLILANTYHMYLRPGEKVVEQLGGLHRFAQFQGSFLTDSGGFQAFSLSDNVKLQEDGIVFKSHIDGSKHLFTPIKVLDIQYSLNSDIMMVLDDLVGLPAPLKRLEESIKRSAKWANMSLEYHKENNRPNNNLFAIIQGGTHLKMRSLSVGLTHEGFDGYAIGGLAVGESVDEMLETIAHTAPLLPKDKPRYLMGVGTPENILDAISLGVDMFDCVMPTRNARNATLFTHSGKISIKNAPYKLDDTPIEENCACYACKRYSKAYLHHLFRAKELTYARLASLHNLHFYLELVKNARNAILEKRFLSFKKEFLEKYHSCSH.

The Proton acceptor role is filled by Asp90. Residues 90–94 (DSGGF), Asp144, Gln189, and Gly215 contribute to the substrate site. An RNA binding region spans residues 246-252 (GVGTPEN). Asp265 (nucleophile) is an active-site residue. The RNA binding; important for wobble base 34 recognition stretch occupies residues 270–274 (TRNAR). Cys303, Cys305, Cys308, and His334 together coordinate Zn(2+).

The protein belongs to the queuine tRNA-ribosyltransferase family. As to quaternary structure, homodimer. Within each dimer, one monomer is responsible for RNA recognition and catalysis, while the other monomer binds to the replacement base PreQ1. Requires Zn(2+) as cofactor.

The catalysed reaction is 7-aminomethyl-7-carbaguanine + guanosine(34) in tRNA = 7-aminomethyl-7-carbaguanosine(34) in tRNA + guanine. Its pathway is tRNA modification; tRNA-queuosine biosynthesis. Its function is as follows. Catalyzes the base-exchange of a guanine (G) residue with the queuine precursor 7-aminomethyl-7-deazaguanine (PreQ1) at position 34 (anticodon wobble position) in tRNAs with GU(N) anticodons (tRNA-Asp, -Asn, -His and -Tyr). Catalysis occurs through a double-displacement mechanism. The nucleophile active site attacks the C1' of nucleotide 34 to detach the guanine base from the RNA, forming a covalent enzyme-RNA intermediate. The proton acceptor active site deprotonates the incoming PreQ1, allowing a nucleophilic attack on the C1' of the ribose to form the product. After dissociation, two additional enzymatic reactions on the tRNA convert PreQ1 to queuine (Q), resulting in the hypermodified nucleoside queuosine (7-(((4,5-cis-dihydroxy-2-cyclopenten-1-yl)amino)methyl)-7-deazaguanosine). This is Queuine tRNA-ribosyltransferase from Helicobacter pylori (strain J99 / ATCC 700824) (Campylobacter pylori J99).